A 1250-amino-acid chain; its full sequence is DNA-directed RNA polymerase subunit beta'' (1250 aa).

Zn(2+) is bound by residues Cys-224, Cys-314, Cys-321, and Cys-324.

This sequence belongs to the RNA polymerase beta' chain family. RpoC2 subfamily. In plastids the minimal PEP RNA polymerase catalytic core is composed of four subunits: alpha, beta, beta', and beta''. When a (nuclear-encoded) sigma factor is associated with the core the holoenzyme is formed, which can initiate transcription. The cofactor is Zn(2+).

It is found in the plastid. Its subcellular location is the chloroplast. It catalyses the reaction RNA(n) + a ribonucleoside 5'-triphosphate = RNA(n+1) + diphosphate. DNA-dependent RNA polymerase catalyzes the transcription of DNA into RNA using the four ribonucleoside triphosphates as substrates. The polypeptide is DNA-directed RNA polymerase subunit beta'' (Staurastrum punctulatum (Green alga)).